The chain runs to 686 residues: Amphiphysin (686 aa).

Coiled coils occupy residues 10–83 (AKNV…SLHE) and 144–191 (DYDS…QEEL). A BAR domain is found at 24–240 (VLQKLGKADE…MTKLGDQHAD (217 aa)). Disordered stretches follow at residues 244 to 314 (SIQG…PTKE), 421 to 441 (AETE…ATAA), and 483 to 597 (VEEA…AGAV). Ser-252 is modified (phosphoserine). At Thr-260 the chain carries Phosphothreonine. Residues 261 to 274 (PSPPEEPSPLPSPT) show a composition bias toward pro residues. Ser-262, Ser-268, Ser-272, and Ser-276 each carry phosphoserine. Thr-280 is subject to Phosphothreonine. Positions 424–441 (EQALPTEPQAEEPPATAA) are enriched in low complexity. At Ser-500 the chain carries Phosphoserine. Basic and acidic residues predominate over residues 541-562 (SNHEGEGEHQETATGTEPREAA). Residues 613-686 (GFLYKVETLH…FPENFTRRLE (74 aa)) form the SH3 domain. The residue at position 629 (Ser-629) is a Phosphoserine.

In terms of assembly, heterodimer with BIN1. Binds SH3GLB1. Interacts with REPS1 and SGIP1. Binds AP2A2. Interacts with AP2B1. Interacts with DNM1 and SYNJ1.

It is found in the cytoplasmic vesicle. The protein resides in the secretory vesicle. It localises to the synaptic vesicle membrane. The protein localises to the cytoplasm. Its subcellular location is the cytoskeleton. In terms of biological role, may participate in mechanisms of regulated exocytosis in synapses and certain endocrine cell types. May control the properties of the membrane associated cytoskeleton. The polypeptide is Amphiphysin (Amph) (Mus musculus (Mouse)).